A 356-amino-acid chain; its full sequence is Protein-glutamate methylesterase/protein-glutamine glutaminase 2 (356 aa).

The Response regulatory domain maps to 7-124; it reads KVLCVDDSAL…RDGLMEYTDT (118 aa). Aspartate 58 is modified (4-aspartylphosphate). The 193-residue stretch at 157 to 349 folds into the CheB-type methylesterase domain; sequence LLSTEKLIIL…QRVMARLATY (193 aa). Residues serine 169, histidine 195, and aspartate 291 contribute to the active site.

It belongs to the CheB family. Post-translationally, phosphorylated by CheA. Phosphorylation of the N-terminal regulatory domain activates the methylesterase activity.

The protein localises to the cytoplasm. It carries out the reaction [protein]-L-glutamate 5-O-methyl ester + H2O = L-glutamyl-[protein] + methanol + H(+). The catalysed reaction is L-glutaminyl-[protein] + H2O = L-glutamyl-[protein] + NH4(+). Its function is as follows. Involved in chemotaxis. Part of a chemotaxis signal transduction system that modulates chemotaxis in response to various stimuli. Catalyzes the demethylation of specific methylglutamate residues introduced into the chemoreceptors (methyl-accepting chemotaxis proteins or MCP) by CheR. Also mediates the irreversible deamidation of specific glutamine residues to glutamic acid. This chain is Protein-glutamate methylesterase/protein-glutamine glutaminase 2, found in Cupriavidus pinatubonensis (strain JMP 134 / LMG 1197) (Cupriavidus necator (strain JMP 134)).